Consider the following 465-residue polypeptide: UDP-N-acetylmuramate--L-alanine ligase (465 aa).

114 to 120 is an ATP binding site; it reads GAHGKTT.

This sequence belongs to the MurCDEF family.

The protein localises to the cytoplasm. The catalysed reaction is UDP-N-acetyl-alpha-D-muramate + L-alanine + ATP = UDP-N-acetyl-alpha-D-muramoyl-L-alanine + ADP + phosphate + H(+). The protein operates within cell wall biogenesis; peptidoglycan biosynthesis. In terms of biological role, cell wall formation. This Syntrophomonas wolfei subsp. wolfei (strain DSM 2245B / Goettingen) protein is UDP-N-acetylmuramate--L-alanine ligase.